We begin with the raw amino-acid sequence, 240 residues long: Uridylate kinase (240 aa).

Residue 13–16 (KASG) coordinates ATP. The interval 21–26 (GGQGFG) is involved in allosteric activation by GTP. UMP is bound at residue G55. 2 residues coordinate ATP: G56 and R60. Residues D75 and 136-143 (TGNPFFTT) contribute to the UMP site. 4 residues coordinate ATP: T163, Q164, Y169, and D172.

It belongs to the UMP kinase family. In terms of assembly, homohexamer.

It is found in the cytoplasm. It catalyses the reaction UMP + ATP = UDP + ADP. The protein operates within pyrimidine metabolism; CTP biosynthesis via de novo pathway; UDP from UMP (UMPK route): step 1/1. With respect to regulation, allosterically activated by GTP. Inhibited by UTP. Functionally, catalyzes the reversible phosphorylation of UMP to UDP. This chain is Uridylate kinase, found in Rhizobium johnstonii (strain DSM 114642 / LMG 32736 / 3841) (Rhizobium leguminosarum bv. viciae).